The chain runs to 405 residues: Probable tRNA sulfurtransferase (405 aa).

In terms of domain architecture, THUMP spans 60–165; it reads DKVMGRLKLV…LNGIFLSSET (106 aa). Residues 183-184, 208-209, R265, G287, and Q296 contribute to the ATP site; these read ML and HF.

It belongs to the ThiI family.

It localises to the cytoplasm. The enzyme catalyses [ThiI sulfur-carrier protein]-S-sulfanyl-L-cysteine + a uridine in tRNA + 2 reduced [2Fe-2S]-[ferredoxin] + ATP + H(+) = [ThiI sulfur-carrier protein]-L-cysteine + a 4-thiouridine in tRNA + 2 oxidized [2Fe-2S]-[ferredoxin] + AMP + diphosphate. It catalyses the reaction [ThiS sulfur-carrier protein]-C-terminal Gly-Gly-AMP + S-sulfanyl-L-cysteinyl-[cysteine desulfurase] + AH2 = [ThiS sulfur-carrier protein]-C-terminal-Gly-aminoethanethioate + L-cysteinyl-[cysteine desulfurase] + A + AMP + 2 H(+). Its pathway is cofactor biosynthesis; thiamine diphosphate biosynthesis. Its function is as follows. Catalyzes the ATP-dependent transfer of a sulfur to tRNA to produce 4-thiouridine in position 8 of tRNAs, which functions as a near-UV photosensor. Also catalyzes the transfer of sulfur to the sulfur carrier protein ThiS, forming ThiS-thiocarboxylate. This is a step in the synthesis of thiazole, in the thiamine biosynthesis pathway. The sulfur is donated as persulfide by IscS. This is Probable tRNA sulfurtransferase from Lactiplantibacillus plantarum (strain ATCC BAA-793 / NCIMB 8826 / WCFS1) (Lactobacillus plantarum).